Reading from the N-terminus, the 365-residue chain is Histidinol-phosphate aminotransferase (365 aa).

Position 221 is an N6-(pyridoxal phosphate)lysine (lysine 221).

This sequence belongs to the class-II pyridoxal-phosphate-dependent aminotransferase family. Histidinol-phosphate aminotransferase subfamily. As to quaternary structure, homodimer. Pyridoxal 5'-phosphate serves as cofactor.

It carries out the reaction L-histidinol phosphate + 2-oxoglutarate = 3-(imidazol-4-yl)-2-oxopropyl phosphate + L-glutamate. The protein operates within amino-acid biosynthesis; L-histidine biosynthesis; L-histidine from 5-phospho-alpha-D-ribose 1-diphosphate: step 7/9. This chain is Histidinol-phosphate aminotransferase, found in Nitrobacter hamburgensis (strain DSM 10229 / NCIMB 13809 / X14).